Here is a 239-residue protein sequence, read N- to C-terminus: Uridylate kinase (239 aa).

12-15 is an ATP binding site; sequence KLSG. The involved in allosteric activation by GTP stretch occupies residues 20 to 25; that stretch reads GDQGAG. A UMP-binding site is contributed by G54. ATP is bound by residues G55 and R59. Residues D74 and 135–142 each bind UMP; that span reads TGNPFFTT. Residues T162, Y168, and D171 each contribute to the ATP site.

It belongs to the UMP kinase family. As to quaternary structure, homohexamer.

It localises to the cytoplasm. The catalysed reaction is UMP + ATP = UDP + ADP. It participates in pyrimidine metabolism; CTP biosynthesis via de novo pathway; UDP from UMP (UMPK route): step 1/1. Its activity is regulated as follows. Allosterically activated by GTP. Inhibited by UTP. Functionally, catalyzes the reversible phosphorylation of UMP to UDP. The protein is Uridylate kinase of Methylococcus capsulatus (strain ATCC 33009 / NCIMB 11132 / Bath).